The chain runs to 187 residues: Elongation factor P (187 aa).

The protein belongs to the elongation factor P family.

The protein resides in the cytoplasm. Its pathway is protein biosynthesis; polypeptide chain elongation. In terms of biological role, involved in peptide bond synthesis. Stimulates efficient translation and peptide-bond synthesis on native or reconstituted 70S ribosomes in vitro. Probably functions indirectly by altering the affinity of the ribosome for aminoacyl-tRNA, thus increasing their reactivity as acceptors for peptidyl transferase. This chain is Elongation factor P, found in Synechococcus sp. (strain CC9311).